We begin with the raw amino-acid sequence, 238 residues long: Ribonuclease PH (238 aa).

Phosphate is bound by residues arginine 86 and 124-126; that span reads GTR.

The protein belongs to the RNase PH family. As to quaternary structure, homohexameric ring arranged as a trimer of dimers.

It catalyses the reaction tRNA(n+1) + phosphate = tRNA(n) + a ribonucleoside 5'-diphosphate. Phosphorolytic 3'-5' exoribonuclease that plays an important role in tRNA 3'-end maturation. Removes nucleotide residues following the 3'-CCA terminus of tRNAs; can also add nucleotides to the ends of RNA molecules by using nucleoside diphosphates as substrates, but this may not be physiologically important. Probably plays a role in initiation of 16S rRNA degradation (leading to ribosome degradation) during starvation. The polypeptide is Ribonuclease PH (Psychrobacter cryohalolentis (strain ATCC BAA-1226 / DSM 17306 / VKM B-2378 / K5)).